Here is a 180-residue protein sequence, read N- to C-terminus: Oligoribonuclease (180 aa).

The Exonuclease domain occupies 7–170; the sequence is LIWIDLEMTG…DDIRESIAEL (164 aa). The active site involves Tyr128.

Belongs to the oligoribonuclease family.

Its subcellular location is the cytoplasm. Its function is as follows. 3'-to-5' exoribonuclease specific for small oligoribonucleotides. In Pseudomonas aeruginosa (strain UCBPP-PA14), this protein is Oligoribonuclease.